A 181-amino-acid polypeptide reads, in one-letter code: Ribosome maturation factor RimM (181 aa).

Residues 100–177 (EEGFYWMQLI…QIQVDWQLED (78 aa)) enclose the PRC barrel domain.

This sequence belongs to the RimM family. As to quaternary structure, binds ribosomal protein uS19.

It is found in the cytoplasm. An accessory protein needed during the final step in the assembly of 30S ribosomal subunit, possibly for assembly of the head region. Essential for efficient processing of 16S rRNA. May be needed both before and after RbfA during the maturation of 16S rRNA. It has affinity for free ribosomal 30S subunits but not for 70S ribosomes. In Hydrogenovibrio crunogenus (strain DSM 25203 / XCL-2) (Thiomicrospira crunogena), this protein is Ribosome maturation factor RimM.